The following is a 685-amino-acid chain: Protein SPT2 homolog (685 aa).

The tract at residues 1 to 570 is important for interaction with DNA; that stretch reads MDFREILMIA…PPLSGYRAAQ (570 aa). Lys-37 is covalently cross-linked (Glycyl lysine isopeptide (Lys-Gly) (interchain with G-Cter in SUMO2)). A coiled-coil region spans residues 45–81; sequence QAFLKRKEEELRRKALEEKRRKEELVKKRIELKHDKK. Residues 79-168 form a disordered region; it reads DKKARAMAKR…PLKSAPPPMN (90 aa). Basic and acidic residues predominate over residues 101–111; it reads IEEKSKKRQAT. Residues 123-148 adopt a coiled-coil conformation; the sequence is YEMEEENEFLEYNHAESEQEYEEEQE. A Glycyl lysine isopeptide (Lys-Gly) (interchain with G-Cter in SUMO2) cross-link involves residue Lys-187. 2 stretches are compositionally biased toward basic and acidic residues: residues 188-209 and 260-275; these read VVKK…EFLE and HAEK…EKHL. 2 disordered regions span residues 188–615 and 644–685; these read VVKK…QEEI and SWKE…LKRR. Position 278 is a phosphoserine (Ser-278). Composition is skewed to low complexity over residues 317–330, 365–385, and 402–415; these read SSTS…TSAS, SPGV…PSTG, and GSSS…ISGS. The segment covering 416 to 431 has biased composition (polar residues); it reads KKPTNDSNPSRRTVSG. Over residues 435-501 the composition is skewed to low complexity; sequence PGQPASSSGG…PGRSISGSIP (67 aa). Position 471 is a phosphoserine (Ser-471). Polar residues predominate over residues 519 to 529; sequence GPGQTVSSSGP. Low complexity predominate over residues 542-553; that stretch reads ISSKNIISRSSN. The tract at residues 571–685 is important for interaction with histones; the sequence is GPQRLPFPTG…RRRAKKLKRR (115 aa). At Lys-582 the chain carries N6-acetyllysine. Residues 587-613 show a composition bias toward acidic residues; that stretch reads YEEEDDDDDEYDSEMEDFIEDEGEPQE. A Phosphoserine modification is found at Ser-599. Basic and acidic residues-rich tracts occupy residues 644–655 and 666–676; these read SWKEQQKEEAKS and EMRREEEEMQR. Residues 645–685 are a coiled coil; sequence WKEQQKEEAKSLRLGMQEDLEEMRREEEEMQRRRAKKLKRR.

This sequence belongs to the SPT2 family. In terms of assembly, interacts with histones. Interacts with a heterotetrameric complex formed by histone H3 and H4, especially when the histone tetramer is not bound to DNA. Interacts with histone H3.3.

Its subcellular location is the nucleus. It is found in the nucleolus. Functionally, histone chaperone that stabilizes pre-existing histone tetramers and regulates replication-independent histone exchange on chromatin. Required for normal chromatin refolding in the coding region of transcribed genes, and for the suppression of spurious transcription. Binds DNA and histones and promotes nucleosome assembly (in vitro). Facilitates formation of tetrameric histone complexes containing histone H3 and H4. Modulates RNA polymerase 1-mediated transcription. Binds DNA, with a preference for branched DNA species, such as Y-form DNA and Holliday junction DNA. This Homo sapiens (Human) protein is Protein SPT2 homolog (SPTY2D1).